The following is a 308-amino-acid chain: Ribosomal RNA small subunit methyltransferase H (308 aa).

S-adenosyl-L-methionine contacts are provided by residues 36–38 (GGH), Asp55, Phe82, Asp103, and Gln110.

The protein belongs to the methyltransferase superfamily. RsmH family.

Its subcellular location is the cytoplasm. The catalysed reaction is cytidine(1402) in 16S rRNA + S-adenosyl-L-methionine = N(4)-methylcytidine(1402) in 16S rRNA + S-adenosyl-L-homocysteine + H(+). Specifically methylates the N4 position of cytidine in position 1402 (C1402) of 16S rRNA. This chain is Ribosomal RNA small subunit methyltransferase H, found in Helicobacter pylori (strain J99 / ATCC 700824) (Campylobacter pylori J99).